A 198-amino-acid polypeptide reads, in one-letter code: MNNIFSKLRDFVGLNEQVEYEYYEEEADTDNYQNLYQQENPQPAPAEAAPNNRRWREPMTTMGDDVATGTKSAMGNVIGMPGAINGISEVLVLEPRTFEEMPQAIQALRERKSVVLNLTIMDPDQAQRAVDFVAGGTYALDGHQERIGESIFLFTPSCVQVSTQGGVIHEVPQPPARPARPASTNPPAWGNETNRMAQ.

The segment at 170-198 is disordered; that stretch reads EVPQPPARPARPASTNPPAWGNETNRMAQ. The segment covering 179–188 has biased composition (low complexity); that stretch reads ARPASTNPPA.

It belongs to the SepF family. As to quaternary structure, homodimer. Interacts with FtsZ.

The protein resides in the cytoplasm. In terms of biological role, cell division protein that is part of the divisome complex and is recruited early to the Z-ring. Probably stimulates Z-ring formation, perhaps through the cross-linking of FtsZ protofilaments. Its function overlaps with FtsA. In Trichormus variabilis (strain ATCC 29413 / PCC 7937) (Anabaena variabilis), this protein is Cell division protein SepF.